A 528-amino-acid polypeptide reads, in one-letter code: Phosphoenolpyruvate carboxykinase (ATP) (528 aa).

Substrate-binding residues include Arg-56, Tyr-192, and Lys-198. Residues Lys-198, His-217, and 233 to 241 (GLSGTGKTT) contribute to the ATP site. Mn(2+) contacts are provided by Lys-198 and His-217. Position 254 (Asp-254) interacts with Mn(2+). Glu-282, Arg-319, and Thr-444 together coordinate ATP. Arg-319 contributes to the substrate binding site.

This sequence belongs to the phosphoenolpyruvate carboxykinase (ATP) family. Mn(2+) is required as a cofactor.

It localises to the cytoplasm. The catalysed reaction is oxaloacetate + ATP = phosphoenolpyruvate + ADP + CO2. Its pathway is carbohydrate biosynthesis; gluconeogenesis. Its function is as follows. Involved in the gluconeogenesis. Catalyzes the conversion of oxaloacetate (OAA) to phosphoenolpyruvate (PEP) through direct phosphoryl transfer between the nucleoside triphosphate and OAA. This chain is Phosphoenolpyruvate carboxykinase (ATP), found in Geobacillus kaustophilus (strain HTA426).